The primary structure comprises 472 residues: Siroheme synthase 1 (472 aa).

The tract at residues 1-203 (MDYLPLFADL…GQLTEAENEL (203 aa)) is precorrin-2 dehydrogenase /sirohydrochlorin ferrochelatase. Residues 22-23 (EV) and 43-44 (QT) each bind NAD(+). Phosphoserine is present on S128. The interval 215 to 472 (GEVALVGAGP…AISPSVVNLA (258 aa)) is uroporphyrinogen-III C-methyltransferase. Residue P224 participates in S-adenosyl-L-methionine binding. D247 functions as the Proton acceptor in the catalytic mechanism. The active-site Proton donor is the K269. S-adenosyl-L-methionine is bound by residues 300-302 (GGD), I305, 330-331 (TA), M382, and G411.

This sequence in the N-terminal section; belongs to the precorrin-2 dehydrogenase / sirohydrochlorin ferrochelatase family. The protein in the C-terminal section; belongs to the precorrin methyltransferase family.

It carries out the reaction uroporphyrinogen III + 2 S-adenosyl-L-methionine = precorrin-2 + 2 S-adenosyl-L-homocysteine + H(+). It catalyses the reaction precorrin-2 + NAD(+) = sirohydrochlorin + NADH + 2 H(+). The enzyme catalyses siroheme + 2 H(+) = sirohydrochlorin + Fe(2+). It participates in cofactor biosynthesis; adenosylcobalamin biosynthesis; precorrin-2 from uroporphyrinogen III: step 1/1. Its pathway is cofactor biosynthesis; adenosylcobalamin biosynthesis; sirohydrochlorin from precorrin-2: step 1/1. The protein operates within porphyrin-containing compound metabolism; siroheme biosynthesis; precorrin-2 from uroporphyrinogen III: step 1/1. It functions in the pathway porphyrin-containing compound metabolism; siroheme biosynthesis; siroheme from sirohydrochlorin: step 1/1. It participates in porphyrin-containing compound metabolism; siroheme biosynthesis; sirohydrochlorin from precorrin-2: step 1/1. In terms of biological role, multifunctional enzyme that catalyzes the SAM-dependent methylations of uroporphyrinogen III at position C-2 and C-7 to form precorrin-2 via precorrin-1. Then it catalyzes the NAD-dependent ring dehydrogenation of precorrin-2 to yield sirohydrochlorin. Finally, it catalyzes the ferrochelation of sirohydrochlorin to yield siroheme. The chain is Siroheme synthase 1 from Yersinia pestis bv. Antiqua (strain Nepal516).